A 147-amino-acid chain; its full sequence is Hemoglobin subunit epsilon (147 aa).

Positions 3–147 (HFTAEEKAAI…VAIALGHKYH (145 aa)) constitute a Globin domain. 2 positions are modified to phosphoserine: S14 and S51. Heme b is bound by residues H64 and H93.

Belongs to the globin family. As to quaternary structure, heterotetramer of two alpha chains and two epsilon chains in early embryonic hemoglobin Gower-2; two zeta chains and two epsilon chains in early embryonic hemoglobin Gower-1. In terms of tissue distribution, red blood cells.

In terms of biological role, the epsilon chain is a beta-type chain of early mammalian embryonic hemoglobin. This is Hemoglobin subunit epsilon (HBE1) from Callithrix jacchus (White-tufted-ear marmoset).